Consider the following 644-residue polypeptide: Putative aldehyde dehydrogenase-like protein YHR039C (644 aa).

N-linked (GlcNAc...) asparagine glycosylation occurs at asparagine 15. The active-site Proton acceptor is the glutamate 354. Cysteine 389 (nucleophile) is an active-site residue. N-linked (GlcNAc...) asparagine glycosylation is found at asparagine 565 and asparagine 627.

Belongs to the aldehyde dehydrogenase family. In terms of processing, N-glycosylated.

The protein resides in the endoplasmic reticulum. In Saccharomyces cerevisiae (strain ATCC 204508 / S288c) (Baker's yeast), this protein is Putative aldehyde dehydrogenase-like protein YHR039C (MSC7).